The chain runs to 248 residues: Probable transcriptional regulatory protein Ecaj_0351 (248 aa).

The disordered stretch occupies residues M1–R21.

The protein belongs to the TACO1 family.

The protein localises to the cytoplasm. The protein is Probable transcriptional regulatory protein Ecaj_0351 of Ehrlichia canis (strain Jake).